The sequence spans 218 residues: Small ribosomal subunit protein uS3c (218 aa).

The 72-residue stretch at 47 to 118 (VQKHMRISSG…RLNITITRIA (72 aa)) folds into the KH type-2 domain.

Belongs to the universal ribosomal protein uS3 family. Part of the 30S ribosomal subunit.

The protein localises to the plastid. It is found in the chloroplast. The protein is Small ribosomal subunit protein uS3c (rps3) of Amborella trichopoda.